Reading from the N-terminus, the 320-residue chain is Ferrochelatase (320 aa).

Fe cation-binding residues include histidine 194 and glutamate 275.

The protein belongs to the ferrochelatase family.

The protein resides in the cytoplasm. The catalysed reaction is heme b + 2 H(+) = protoporphyrin IX + Fe(2+). Its pathway is porphyrin-containing compound metabolism; protoheme biosynthesis; protoheme from protoporphyrin-IX: step 1/1. Catalyzes the ferrous insertion into protoporphyrin IX. The chain is Ferrochelatase from Klebsiella pneumoniae (strain 342).